The primary structure comprises 145 residues: Superoxide dismutase [Mn/Fe] (145 aa).

The Fe(3+) site is built by H10 and H64. Positions 10 and 64 each coordinate Mn(2+).

It belongs to the iron/manganese superoxide dismutase family. Requires Mn(2+) as cofactor. It depends on Fe(3+) as a cofactor.

It carries out the reaction 2 superoxide + 2 H(+) = H2O2 + O2. In terms of biological role, destroys superoxide anion radicals which are normally produced within the cells and which are toxic to biological systems. Catalyzes the dismutation of superoxide anion radicals into O2 and H2O2 by successive reduction and oxidation of the transition metal ion at the active site. This Streptococcus canis protein is Superoxide dismutase [Mn/Fe] (sodA).